Here is a 527-residue protein sequence, read N- to C-terminus: Phosphoenolpyruvate carboxykinase (ATP) (527 aa).

Positions 54, 190, and 196 each coordinate substrate. ATP-binding positions include Lys196, His215, and 231–239; that span reads GLSGTGKTT. Positions 196 and 215 each coordinate Mn(2+). A Mn(2+)-binding site is contributed by Asp252. ATP contacts are provided by residues Glu280, Arg317, 436–437, and Thr442; that span reads RI. Arg317 is a substrate binding site.

Belongs to the phosphoenolpyruvate carboxykinase (ATP) family. Mn(2+) serves as cofactor.

It is found in the cytoplasm. It carries out the reaction oxaloacetate + ATP = phosphoenolpyruvate + ADP + CO2. It participates in carbohydrate biosynthesis; gluconeogenesis. Functionally, involved in the gluconeogenesis. Catalyzes the conversion of oxaloacetate (OAA) to phosphoenolpyruvate (PEP) through direct phosphoryl transfer between the nucleoside triphosphate and OAA. The chain is Phosphoenolpyruvate carboxykinase (ATP) from Oceanobacillus iheyensis (strain DSM 14371 / CIP 107618 / JCM 11309 / KCTC 3954 / HTE831).